The following is a 410-amino-acid chain: Phosphoglycerate kinase (410 aa).

Substrate is bound by residues 24–26, arginine 40, 63–66, arginine 122, and arginine 162; these read DLN and HLGR. Residues lysine 212, glycine 300, glutamate 331, and 360–363 contribute to the ATP site; that span reads GGDS.

This sequence belongs to the phosphoglycerate kinase family. As to quaternary structure, monomer.

The protein resides in the cytoplasm. It carries out the reaction (2R)-3-phosphoglycerate + ATP = (2R)-3-phospho-glyceroyl phosphate + ADP. Its pathway is carbohydrate degradation; glycolysis; pyruvate from D-glyceraldehyde 3-phosphate: step 2/5. This is Phosphoglycerate kinase from Nocardia farcinica (strain IFM 10152).